A 168-amino-acid chain; its full sequence is Group IIF secretory phospholipase A2 (168 aa).

The N-terminal stretch at 1–20 (MKKFFAIAVLAGSVVTTAHS) is a signal peptide. 7 disulfide bridges follow: Cys-46–Cys-138, Cys-48–Cys-64, Cys-63–Cys-120, Cys-69–Cys-145, Cys-70–Cys-113, Cys-79–Cys-106, and Cys-98–Cys-111. Ca(2+) is bound by residues Tyr-47, Gly-49, and Gly-51. His-67 is a catalytic residue. Ca(2+) is bound at residue Asp-68. 2 N-linked (GlcNAc...) asparagine glycosylation sites follow: Asn-92 and Asn-102. Asp-114 is an active-site residue. Residues 139–168 (QGPTPNCSIYDPYPEEVTCGHGLPATPVST) form a required for localization on the plasma membrane region. An N-linked (GlcNAc...) asparagine glycan is attached at Asn-144.

The protein belongs to the phospholipase A2 family. Ca(2+) is required as a cofactor. Strongly expressed in testis.

Its subcellular location is the secreted. The protein resides in the cell membrane. It carries out the reaction a 1,2-diacyl-sn-glycero-3-phosphocholine + H2O = a 1-acyl-sn-glycero-3-phosphocholine + a fatty acid + H(+). It catalyses the reaction 1-hexadecanoyl-2-(9Z-octadecenoyl)-sn-glycero-3-phospho-(1'-sn-glycerol) + H2O = 1-hexadecanoyl-sn-glycero-3-phospho-(1'-sn-glycerol) + (9Z)-octadecenoate + H(+). The enzyme catalyses 1-hexadecanoyl-2-(9Z,12Z-octadecadienoyl)-sn-glycero-3-phosphoethanolamine + H2O = 1-hexadecanoyl-sn-glycero-3-phosphoethanolamine + (9Z,12Z)-octadecadienoate + H(+). The catalysed reaction is 1-hexadecanoyl-2-(5Z,8Z,11Z,14Z-eicosatetraenoyl)-sn-glycero-3-phosphoethanolamine + H2O = 1-hexadecanoyl-sn-glycero-3-phosphoethanolamine + (5Z,8Z,11Z,14Z)-eicosatetraenoate + H(+). It carries out the reaction 1-hexadecanoyl-2-(9Z-octadecenoyl)-sn-glycero-3-phosphocholine + H2O = 1-hexadecanoyl-sn-glycero-3-phosphocholine + (9Z)-octadecenoate + H(+). It catalyses the reaction 1-hexadecanoyl-2-(9Z-octadecenoyl)-sn-glycero-3-phospho-L-serine + H2O = 1-hexadecanoyl-sn-glycero-3-phospho-L-serine + (9Z)-octadecenoate + H(+). Its function is as follows. Secretory calcium-dependent phospholipase A2 that primarily targets extracellular phospholipids. Hydrolyzes the ester bond of the fatty acyl group attached at the sn-2 position of phospholipids (phospholipase A2 activity), the catalytic efficiency decreasing in the following order: phosphatidylglycerols &gt; phosphatidylethanolamines &gt; phosphatidylcholines &gt; phosphatidylserines. May play a role in lipid mediator production in inflammatory conditions, by providing arachidonic acid to downstream cyclooxygenases and lipoxygenases. The protein is Group IIF secretory phospholipase A2 (Pla2g2f) of Mus musculus (Mouse).